Consider the following 307-residue polypeptide: Small ribosomal subunit protein uS3 (307 aa).

A KH type-2 domain is found at M17–K86. Residues I201 to K226 are compositionally biased toward basic and acidic residues. The disordered stretch occupies residues I201–E265. The span at P240–E265 shows a compositional bias: acidic residues.

It belongs to the universal ribosomal protein uS3 family. Part of the 30S ribosomal subunit.

Binds the lower part of the 30S subunit head. This is Small ribosomal subunit protein uS3 from Methanosarcina mazei (strain ATCC BAA-159 / DSM 3647 / Goe1 / Go1 / JCM 11833 / OCM 88) (Methanosarcina frisia).